A 438-amino-acid polypeptide reads, in one-letter code: MPAIVIIGAQWGDEGKGKATDLLGSRIDYVVKFNGGNNAGHTVVVGDEKYALHLLPSGILTGGVTPVIANGVVVDLDVLFQELDGLIARGVDVSRLKISSNAHVITHYHRTIDKVTERFLGKRQIGTTGRGIGPTYADKINRVGIRIQDLFDENILRQKVEGALDQKNHLLVKVYNRRAIGLDEIVDDLLSYAERLRPMVVDSSLLLHQALEDGKYVLFEGGQATMLDVDHGTYPFVTSSSSTSGGAATGSGIGPNRIDRVIGIVKAYTTRVGSGPFPTELFDEWGEFLRERGFEFGTTTGRPRRTGWYDAPIARYTARVNGVTDFVLTKLDTLTGIERIPVCVAYDVDGVRHDEVPASQSDFHHAKPIYEEFPGWTEDISGARRFEDLPKNAQDYTHALERMSGARISAIGVGPARDEIVVRHDLVGEAPSPADASR.

Residues 12-18 and 40-42 each bind GTP; these read GDEGKGK and GHT. Aspartate 13 serves as the catalytic Proton acceptor. Mg(2+)-binding residues include aspartate 13 and glycine 40. IMP-binding positions include 13 to 16, 38 to 41, threonine 128, arginine 142, glutamine 223, threonine 238, and arginine 302; these read DEGK and NAGH. Catalysis depends on histidine 41, which acts as the Proton donor. A substrate-binding site is contributed by 298-304; that stretch reads TTTGRPR. Residues arginine 304, 330-332, and 412-414 contribute to the GTP site; these read KLD and GVG.

It belongs to the adenylosuccinate synthetase family. In terms of assembly, homodimer. Mg(2+) is required as a cofactor.

It is found in the cytoplasm. It catalyses the reaction IMP + L-aspartate + GTP = N(6)-(1,2-dicarboxyethyl)-AMP + GDP + phosphate + 2 H(+). It participates in purine metabolism; AMP biosynthesis via de novo pathway; AMP from IMP: step 1/2. Its function is as follows. Plays an important role in the de novo pathway of purine nucleotide biosynthesis. Catalyzes the first committed step in the biosynthesis of AMP from IMP. In Leifsonia xyli subsp. xyli (strain CTCB07), this protein is Adenylosuccinate synthetase.